The chain runs to 165 residues: LIM domain transcription factor LMO4 (165 aa).

LIM zinc-binding domains lie at 23-83 and 87-147; these read CAGC…LFGN and CSAC…ALIN.

As to quaternary structure, interacts strongly with LDBS. Interacts with LDB2 and LDB1. Interaction with complexes consisting of at least LDB1 and LHX3 acts to disassemble the complex; may preferentially disassemble LDB1-LHX3 complexes rather than complexes consisting of LDB1, LHX3 and ISL1. Interacts (via the LIM zinc-binding domain 1) with RBBP8. Interacts with both RPPB8 and LDB1 through the same face and cannot bind to both proteins simultaneously. Interacts with BRCA1 (via the BRCT domains); the interaction represses BRCA1 transcriptional activity. Interacts with DEAF1; LMO4 blocks export from nucleus.

In terms of biological role, transcription cofactor. Plays a role in establishing motor neuron identity, in concert with MNX1, acting, at least in part, to disrupt LDB1-LHX3 complexes thereby negatively modulating interneuron genes in motor neurons. This chain is LIM domain transcription factor LMO4 (LMO4), found in Bos taurus (Bovine).